An 875-amino-acid polypeptide reads, in one-letter code: Protein HIR2 (875 aa).

WD repeat units follow at residues 10–47, 118–158, 163–201, 237–277, 278–316, and 320–359; these read IHNE…DTAF, KSPS…KLSE, KASK…THKL, PNNA…PAFY, EKPN…PLFN, and VSST…LGVA. The interval 398–473 is disordered; sequence ESASAAPIPN…IAPGSKKQKK (76 aa). Polar residues predominate over residues 424 to 446; sequence ANNQTNGIKTIQSTSMEFNTPSY. 2 WD repeats span residues 546 to 587 and 589 to 626; these read LFQD…LMAP and VLGV…LAFP. At serine 713 the chain carries Phosphoserine.

Belongs to the WD repeat HIR1 family. As to quaternary structure, component of the HIR complex, composed of HIR1, HIR2, HIR3 and HPC2. This complex may consist of one copy of HIR1 and HIR3 and two copies of HIR2 and HPC2. The HIR complex interacts with ASF1. Interacts with SNF2. Interacts with SNF5. Interacts with SWI3. Interacts with RTT106.

The protein localises to the nucleus. Its subcellular location is the chromosome. Its function is as follows. Component of the HIR complex, which cooperates with ASF1 to promote replication-independent chromatin assembly. The HIR complex is also required for the periodic repression of three of the four histone gene loci during the cell cycle as well as for autogenous regulation of the HTA1-HTB1 locus by H2A and H2B. DNA-binding by the HIR complex may repress transcription by inhibiting nucleosome remodeling by the SWI/SNF complex. The HIR complex may also be required for transcriptional silencing of centromeric, telomeric and mating-type loci in the absence of CAF-1. The sequence is that of Protein HIR2 (HIR2) from Saccharomyces cerevisiae (strain ATCC 204508 / S288c) (Baker's yeast).